The primary structure comprises 296 residues: Phosphatidylserine decarboxylase proenzyme (296 aa).

Residues Asp-113, His-169, and Ser-256 each act as charge relay system; for autoendoproteolytic cleavage activity in the active site. The active-site Schiff-base intermediate with substrate; via pyruvic acid; for decarboxylase activity is the Ser-256. Position 256 is a pyruvic acid (Ser); by autocatalysis (Ser-256).

It belongs to the phosphatidylserine decarboxylase family. PSD-B subfamily. Prokaryotic type II sub-subfamily. As to quaternary structure, heterodimer of a large membrane-associated beta subunit and a small pyruvoyl-containing alpha subunit. Pyruvate is required as a cofactor. Is synthesized initially as an inactive proenzyme. Formation of the active enzyme involves a self-maturation process in which the active site pyruvoyl group is generated from an internal serine residue via an autocatalytic post-translational modification. Two non-identical subunits are generated from the proenzyme in this reaction, and the pyruvate is formed at the N-terminus of the alpha chain, which is derived from the carboxyl end of the proenzyme. The autoendoproteolytic cleavage occurs by a canonical serine protease mechanism, in which the side chain hydroxyl group of the serine supplies its oxygen atom to form the C-terminus of the beta chain, while the remainder of the serine residue undergoes an oxidative deamination to produce ammonia and the pyruvoyl prosthetic group on the alpha chain. During this reaction, the Ser that is part of the protease active site of the proenzyme becomes the pyruvoyl prosthetic group, which constitutes an essential element of the active site of the mature decarboxylase.

Its subcellular location is the cell membrane. It catalyses the reaction a 1,2-diacyl-sn-glycero-3-phospho-L-serine + H(+) = a 1,2-diacyl-sn-glycero-3-phosphoethanolamine + CO2. It functions in the pathway phospholipid metabolism; phosphatidylethanolamine biosynthesis; phosphatidylethanolamine from CDP-diacylglycerol: step 2/2. Functionally, catalyzes the formation of phosphatidylethanolamine (PtdEtn) from phosphatidylserine (PtdSer). The protein is Phosphatidylserine decarboxylase proenzyme of Clostridium beijerinckii (strain ATCC 51743 / NCIMB 8052) (Clostridium acetobutylicum).